The sequence spans 325 residues: MSLELPVFDISKPLSESSLTSLQDACKEWGFFYVTNHGVSRDMYKKLRRFSTGVFELEDEEKMKMGASNYTPRFIASPFFESLRVSGPDFYASAKSSVDAFSDQATDEEFSGLMKEYGEKMTKLCEKIMKAILSSFGDDLHHKYYESEFGNCHGYFRINNYTIPSDQEDDHHNGDEQDLIEGLGMHTDMSCITIVDQDDIGGLQVRTRDGIGLMDINPKDEALVVNVGDLLHAWTNGRLRSSQHRVILKRRGFVGNRFSLAFFWCFDDGKVVFAPDEVVGGCEGMRVFRSFKCGDYLRFRESNEKGKFEKVGDTVEDFARIEDRR.

In terms of domain architecture, Fe2OG dioxygenase spans 152–266; that stretch reads CHGYFRINNY…RFSLAFFWCF (115 aa). Fe cation is bound by residues H186, D188, and H244. R257 contributes to the 2-oxoglutarate binding site.

It belongs to the iron/ascorbate-dependent oxidoreductase family. GA20OX subfamily. Fe(2+) is required as a cofactor. As to expression, highly expressed in elongation zone of lateral roots.

In terms of biological role, negative regulator of root hair growth. The protein is Gibberellin 20-oxidase-like protein of Arabidopsis thaliana (Mouse-ear cress).